The following is a 447-amino-acid chain: Kynurenine 3-monooxygenase (447 aa).

It belongs to the aromatic-ring hydroxylase family. KMO subfamily. Requires FAD as cofactor.

The catalysed reaction is L-kynurenine + NADPH + O2 + H(+) = 3-hydroxy-L-kynurenine + NADP(+) + H2O. It functions in the pathway cofactor biosynthesis; NAD(+) biosynthesis; quinolinate from L-kynurenine: step 1/3. Functionally, catalyzes the hydroxylation of L-kynurenine (L-Kyn) to form 3-hydroxy-L-kynurenine (L-3OHKyn). Required for synthesis of quinolinic acid. In Flavobacterium psychrophilum (strain ATCC 49511 / DSM 21280 / CIP 103535 / JIP02/86), this protein is Kynurenine 3-monooxygenase.